The chain runs to 226 residues: PKHD-type hydroxylase Pfl01_0799 (226 aa).

Positions 78 to 178 constitute a Fe2OG dioxygenase domain; sequence KVFPPLLNCY…RYASFFWTQS (101 aa). 3 residues coordinate Fe cation: H96, D98, and H159. R169 contributes to the 2-oxoglutarate binding site.

Fe(2+) is required as a cofactor. Requires L-ascorbate as cofactor.

In Pseudomonas fluorescens (strain Pf0-1), this protein is PKHD-type hydroxylase Pfl01_0799.